Here is an 806-residue protein sequence, read N- to C-terminus: Leucine--tRNA ligase (806 aa).

The 'HIGH' region signature appears at 40–51 (PYPSGKGLHVGH). A 'KMSKS' region motif is present at residues 580–584 (KMSKS). Lys583 serves as a coordination point for ATP.

It belongs to the class-I aminoacyl-tRNA synthetase family.

The protein resides in the cytoplasm. It carries out the reaction tRNA(Leu) + L-leucine + ATP = L-leucyl-tRNA(Leu) + AMP + diphosphate. The sequence is that of Leucine--tRNA ligase from Ureaplasma urealyticum serovar 10 (strain ATCC 33699 / Western).